Here is an 874-residue protein sequence, read N- to C-terminus: Chaperone protein ClpB 1 (874 aa).

The Clp R domain occupies 6 to 148; sequence PNQFTEKAWE…RQIIQQIRGS (143 aa). Repeat stretches follow at residues 9–73 and 85–148; these read FTEK…IARQ and LGRS…IRGS. Residues 161-342 form an NBD1 region; sequence EALEKYGRDL…RRFQQVFVDQ (182 aa). 208-215 serves as a coordination point for ATP; that stretch reads GEPGVGKT. A linker region spans residues 343-551; sequence PTVEDTISIL…IAEIISKWTG (209 aa). Residues 393–527 adopt a coiled-coil conformation; it reads IDLVDESAAR…MEGGLATTHT (135 aa). Residues 561 to 772 are NBD2; the sequence is EMQKLLNLDE…RVDETIIFHS (212 aa). An ATP-binding site is contributed by 611 to 618; that stretch reads GPTGVGKT. The segment at 773-874 is C-terminal; the sequence is LRKDQLQQIV…IATPTAVPLS (102 aa).

Belongs to the ClpA/ClpB family. Homohexamer. The oligomerization is ATP-dependent.

It localises to the cytoplasm. Part of a stress-induced multi-chaperone system, it is involved in the recovery of the cell from heat-induced damage, in cooperation with DnaK, DnaJ and GrpE. Acts before DnaK, in the processing of protein aggregates. Protein binding stimulates the ATPase activity; ATP hydrolysis unfolds the denatured protein aggregates, which probably helps expose new hydrophobic binding sites on the surface of ClpB-bound aggregates, contributing to the solubilization and refolding of denatured protein aggregates by DnaK. Necessary for thermotolerance. In Synechococcus elongatus (strain ATCC 33912 / PCC 7942 / FACHB-805) (Anacystis nidulans R2), this protein is Chaperone protein ClpB 1 (clpB1).